The sequence spans 340 residues: Serine racemase (340 aa).

Mg(2+) is bound at residue Glu-13. 5 residues coordinate ATP: Ser-31, Ser-32, Ile-33, Lys-51, and Thr-52. Residue Lys-56 is the Proton acceptor of the active site. Lys-56 is subject to N6-(pyridoxal phosphate)lysine. The Ca(2+) site is built by Pro-69 and Thr-81. Ser-84 serves as the catalytic Proton acceptor. Pyridoxal 5'-phosphate is bound at residue Asn-86. Gln-89 contributes to the ATP binding site. An S-nitrosocysteine modification is found at Cys-113. Tyr-121 is a binding site for ATP. Asn-154 serves as a coordination point for pyridoxal 5'-phosphate. Residue Asp-178 coordinates Mg(2+). Positions 185, 186, 187, 188, and 189 each coordinate pyridoxal 5'-phosphate. The Mg(2+) site is built by Glu-210, Ala-214, Asp-216, and Asn-247. 4 residues coordinate Ca(2+): Glu-210, Ala-214, Asp-216, and Asn-247. Mn(2+)-binding residues include Glu-210, Ala-214, and Asp-216. An ATP-binding site is contributed by Lys-279. Ser-313 serves as a coordination point for pyridoxal 5'-phosphate. Asn-316 serves as a coordination point for ATP.

The protein belongs to the serine/threonine dehydratase family. In terms of assembly, homodimer. Mg(2+) serves as cofactor. Mn(2+) is required as a cofactor. It depends on Ca(2+) as a cofactor. The cofactor is pyridoxal 5'-phosphate. In terms of processing, S-nitrosylated, leading to decrease the enzyme activity. Expressed in the cerebellum, hippocampus, dorsolateral prefrontal cortex, and in motor neurons and glial cells of the lumbar spinal cord (at protein level). Increased in the dorsolateral prefrontal cortex of schizophrenic patients (at protein level). Brain: expressed at high levels in hippocampus and corpus callosum, intermediate levels in substantia nigra and caudate, and low levels in amygdala, thalamus, and subthalamic nuclei. Expressed in heart, skeletal muscle, kidney, and liver.

The enzyme catalyses L-serine = D-serine. It catalyses the reaction D-serine = pyruvate + NH4(+). The catalysed reaction is L-serine = pyruvate + NH4(+). Allosterically activated by magnesium, and possibly also other divalent metal cations. Allosterically activated by ATP, ADP or GTP. Competitively inhibited by malonate. Inhibited by meso-tartrate and malonate. Catalyzes the synthesis of D-serine from L-serine. D-serine is a key coagonist with glutamate at NMDA receptors. Has dehydratase activity towards both L-serine and D-serine. This is Serine racemase (SRR) from Homo sapiens (Human).